The chain runs to 334 residues: Thiamine-binding periplasmic protein (334 aa).

A signal peptide spans 1-23 (MRLLSLLTFSLFAVIGLAPAAQA). Thiamine is bound by residues 64–65 (DG), 166–167 (AT), Trp202, and 220–223 (YTTS).

Belongs to the bacterial solute-binding protein 1 family. The complex is composed of two ATP-binding proteins (ThiQ), two transmembrane proteins (ThiP) and a solute-binding protein (ThiB).

The protein resides in the periplasm. Functionally, part of the ABC transporter complex ThiBPQ involved in thiamine import. In Brucella melitensis biotype 1 (strain ATCC 23456 / CCUG 17765 / NCTC 10094 / 16M), this protein is Thiamine-binding periplasmic protein (thiB).